The primary structure comprises 648 residues: Macrolide export ATP-binding/permease protein MacB (648 aa).

The region spanning Leu-5–Thr-243 is the ABC transporter domain. Gly-41–Ser-48 contributes to the ATP binding site. Helical transmembrane passes span Leu-273–Gly-293, Ala-417–Ala-437, Leu-523–Ile-543, Val-577–Met-597, and Leu-611–Leu-631.

Belongs to the ABC transporter superfamily. Macrolide exporter (TC 3.A.1.122) family. In terms of assembly, homodimer. Part of the tripartite efflux system MacAB-TolC, which is composed of an inner membrane transporter, MacB, a periplasmic membrane fusion protein, MacA, and an outer membrane component, TolC. The complex forms a large protein conduit and can translocate molecules across both the inner and outer membranes. Interacts with MacA.

Its subcellular location is the cell inner membrane. Its function is as follows. Part of the tripartite efflux system MacAB-TolC. MacB is a non-canonical ABC transporter that contains transmembrane domains (TMD), which form a pore in the inner membrane, and an ATP-binding domain (NBD), which is responsible for energy generation. Confers resistance against macrolides. In Salmonella choleraesuis (strain SC-B67), this protein is Macrolide export ATP-binding/permease protein MacB.